The chain runs to 457 residues: Chromosomal replication initiator protein DnaA (457 aa).

Residues 1–71 (MSPSIWEKCL…LLKNFCNINT (71 aa)) form a domain I, interacts with DnaA modulators region. Residues 71–119 (TTPTLMLKICKPKIIQKKFFNELTLKKNILNSKLTYNVNTKLSNIIYSS) form a domain II region. A domain III, AAA+ region region spans residues 120 to 337 (EINTNYTFQN…GALNKILANS (218 aa)). 4 residues coordinate ATP: Gly-165, Gly-167, Lys-168, and Thr-169. The segment at 338-457 (DSKKKIITIN…FLTLLKILSS (120 aa)) is domain IV, binds dsDNA.

It belongs to the DnaA family. Oligomerizes as a right-handed, spiral filament on DNA at oriC.

It localises to the cytoplasm. Plays an essential role in the initiation and regulation of chromosomal replication. ATP-DnaA binds to the origin of replication (oriC) to initiate formation of the DNA replication initiation complex once per cell cycle. Binds the DnaA box (a 9 base pair repeat at the origin) and separates the double-stranded (ds)DNA. Forms a right-handed helical filament on oriC DNA; dsDNA binds to the exterior of the filament while single-stranded (ss)DNA is stabiized in the filament's interior. The ATP-DnaA-oriC complex binds and stabilizes one strand of the AT-rich DNA unwinding element (DUE), permitting loading of DNA polymerase. After initiation quickly degrades to an ADP-DnaA complex that is not apt for DNA replication. Binds acidic phospholipids. This is Chromosomal replication initiator protein DnaA from Buchnera aphidicola subsp. Baizongia pistaciae (strain Bp).